A 230-amino-acid polypeptide reads, in one-letter code: 3-isopropylmalate dehydratase small subunit (230 aa).

It belongs to the LeuD family. LeuD type 1 subfamily. In terms of assembly, heterodimer of LeuC and LeuD.

It carries out the reaction (2R,3S)-3-isopropylmalate = (2S)-2-isopropylmalate. Its pathway is amino-acid biosynthesis; L-leucine biosynthesis; L-leucine from 3-methyl-2-oxobutanoate: step 2/4. Functionally, catalyzes the isomerization between 2-isopropylmalate and 3-isopropylmalate, via the formation of 2-isopropylmaleate. The protein is 3-isopropylmalate dehydratase small subunit of Bifidobacterium longum (strain DJO10A).